Consider the following 465-residue polypeptide: Glutamate--tRNA ligase (465 aa).

The 'HIGH' region signature appears at 8–18 (PSPTGHLHIGG). Residues Cys-97, Cys-99, Cys-124, and Glu-126 each contribute to the Zn(2+) site. The 'KMSKS' region motif lies at 234–238 (RLSKR). Lys-237 contacts ATP.

This sequence belongs to the class-I aminoacyl-tRNA synthetase family. Glutamate--tRNA ligase type 1 subfamily. In terms of assembly, monomer. The cofactor is Zn(2+).

The protein localises to the cytoplasm. It catalyses the reaction tRNA(Glu) + L-glutamate + ATP = L-glutamyl-tRNA(Glu) + AMP + diphosphate. Catalyzes the attachment of glutamate to tRNA(Glu) in a two-step reaction: glutamate is first activated by ATP to form Glu-AMP and then transferred to the acceptor end of tRNA(Glu). This is Glutamate--tRNA ligase from Thermodesulfovibrio yellowstonii (strain ATCC 51303 / DSM 11347 / YP87).